The chain runs to 333 residues: UPF0284 protein TGAM_0534 (333 aa).

It belongs to the UPF0284 family.

The chain is UPF0284 protein TGAM_0534 from Thermococcus gammatolerans (strain DSM 15229 / JCM 11827 / EJ3).